Consider the following 328-residue polypeptide: DNA-directed RNA polymerase subunit alpha (328 aa).

The tract at residues 1–234 (MQNSPTEYLK…GQLSVFADLE (234 aa)) is alpha N-terminal domain (alpha-NTD). The alpha C-terminal domain (alpha-CTD) stretch occupies residues 248 to 328 (VDPILLRPVD…NWPPAGLEKV (81 aa)).

This sequence belongs to the RNA polymerase alpha chain family. Homodimer. The RNAP catalytic core consists of 2 alpha, 1 beta, 1 beta' and 1 omega subunit. When a sigma factor is associated with the core the holoenzyme is formed, which can initiate transcription.

It carries out the reaction RNA(n) + a ribonucleoside 5'-triphosphate = RNA(n+1) + diphosphate. DNA-dependent RNA polymerase catalyzes the transcription of DNA into RNA using the four ribonucleoside triphosphates as substrates. In Methylobacillus flagellatus (strain ATCC 51484 / DSM 6875 / VKM B-1610 / KT), this protein is DNA-directed RNA polymerase subunit alpha.